A 370-amino-acid polypeptide reads, in one-letter code: Protein rough sheath 2 (370 aa).

HTH myb-type domains are found at residues 1 to 53 (MKER…KNYL) and 54 to 108 (RPGI…EKQQ). DNA-binding regions (H-T-H motif) lie at residues 27–53 (WHLV…KNYL) and 81–104 (WKKI…EVFK). The interval 107–129 (QQRELRDSRRPPPEPSPDERGRY) is disordered. Positions 276-340 (KRVEQQLEME…QVKEEKMAEQ (65 aa)) form a coiled coil.

In terms of assembly, homodimer. Interacts with AS2, WRKY1, HIRA, a probable histone chaperone, and RIK, a predicted RNA binding protein. Expressed in lateral organ promordia.

It is found in the nucleus. Its function is as follows. Transcription factor required for normal cell differentiation. Interacts directly with asymmetric leaves 2 (AS2) to repress the knox homeobox genes. The sequence is that of Protein rough sheath 2 (RS2) from Zea mays (Maize).